The following is a 122-amino-acid chain: Large ribosomal subunit protein uL14c (122 aa).

The protein belongs to the universal ribosomal protein uL14 family. In terms of assembly, part of the 50S ribosomal subunit.

The protein resides in the plastid. It is found in the chloroplast. Its function is as follows. Binds to 23S rRNA. The sequence is that of Large ribosomal subunit protein uL14c from Oltmannsiellopsis viridis (Marine flagellate).